We begin with the raw amino-acid sequence, 151 residues long: Large ribosomal subunit protein bL9 (151 aa).

Belongs to the bacterial ribosomal protein bL9 family.

Its function is as follows. Binds to the 23S rRNA. The protein is Large ribosomal subunit protein bL9 of Francisella tularensis subsp. novicida (strain U112).